Here is a 565-residue protein sequence, read N- to C-terminus: Nephrocystin-1 (565 aa).

Positions 1-32 are enriched in acidic residues; it reads GEEEDEEEEEEEESEEGGGEEEESEEEEEEKQ. Disordered stretches follow at residues 1 to 46 and 95 to 132; these read GEEE…KEYI and VEPY…KQRT. The stretch at 2 to 48 forms a coiled coil; the sequence is EEEDEEEEEEEESEEGGGEEEESEEEEEEKQENESHHQATSKEYIAV. S14 bears the Phosphoserine mark. Residues 40–100 enclose the SH3 domain; that stretch reads ATSKEYIAVG…PRTYVEPYNK (61 aa). The segment covering 104–118 has biased composition (acidic residues); it reads QDTSEEEDSEEDVEV. Y182 is modified (phosphotyrosine; by FAK2). A Phosphotyrosine; by SRC modification is found at Y554.

Belongs to the nephrocystin-1 family. As to quaternary structure, interacts with Crk-associated substrate BCAR1, NPHP4, PTK2B/PYK2 and tensin. Interacts with INVS and NPHP3. Interacts with AHI1 and TNK2. Interacts with NPHP4 in a complex containing NPHP1, NPHP4 and RPGRIP1L/NPHP8. Interacts with IQCB1; the interaction likely requires additional interactors. Interacts with KIF7. Interacts with ANKS3. Interacts with SPATA7. Interacts with FLNA. Expressed in renal cells (at protein level).

It localises to the cell junction. The protein resides in the adherens junction. Its subcellular location is the cell projection. The protein localises to the cilium. It is found in the cytoplasm. It localises to the cytoskeleton. The protein resides in the cilium axoneme. Its subcellular location is the tight junction. Functionally, together with BCAR1 it may play a role in the control of epithelial cell polarity. Involved in the organization of apical junctions in kidney cells together with NPHP4 and RPGRIP1L/NPHP8. Does not seem to be strictly required for ciliogenesis. Seems to help to recruit PTK2B/PYK2 to cell matrix adhesions, thereby initiating phosphorylation of PTK2B/PYK2 and PTK2B/PYK2-dependent signaling. May play a role in the regulation of intraflagellar transport (IFT) during cilia assembly. Required for normal retina development. In connecting photoreceptor cilia influences the movement of some IFT proteins such as IFT88 and WDR19. Involved in spermatogenesis. This chain is Nephrocystin-1 (NPHP1), found in Canis lupus familiaris (Dog).